The sequence spans 929 residues: MSDLESAYRLEYFEEEGFHRRECVSCGAHFWTRDGDRETCGEPPCEDYQFIDNPGFDASYSLTEMRSAMVSYFERAGHDSIDPYPVAANRWRDDVLLTQASIYDFQPHVTSGASPPPANPLVVSQPCIRMQDIDNVGKTGRHTMAFEMLGHHAFNADEGTDYAYDGEVYWKDTAVEHCEGLLADVGVSLDEVTFIEDPWVGGGNAGAAFEVIYRGLELATLVFMSLERDPDGEYEMKDGHTYAEMDRRVVDTGYGVERWTWMSQGTPTVYEAVYPDTIDFLKEQAGIEHTDEEAELVHRASKHAGNLDIDEVADIEDARAGIAAELGVDAERLTELVAPLEDIYAIADHSRVLAYMFGDGIVPSNVGTGYLARMVLRRTKRLVDDIGADVPLDELVDMQADRLGYENRDTIRSIVRSEVEKYGETLERGGRRVEQLAEEYADRGEPVPTDELIELYDSHGIQPGMVADIAADVGATVDAPDDFYSLVAARHDDGDSGAAGGDGGGDDRLADLPETETLYYDDAYGSEFEAVVLDVFEREGEDGDGAFDVVLDQTMFYPEGGGQPADTGVLTGDDHTVDVIDVQERDGVVLHRTTDNPGKGEFVRGQIDTERRRRLMAHHTATHIVVYAARQVLGEHVRQAGAQKGVDSSRIDVTHYERVDRETVKEIERVANEIVRANTSVQCEWPDRHEAEAEYGFDLYQGGIPAGEQIRLVHVDDDVQACGGTHVARTGEIGSIKILNAERVQDGVERLTFAAGAAAVEHVQGQEDDLRAAAEVLDVTPAEVPETAERFFTEWKDRGKTIDDLKEQLAEARASGGGAGEEVDVAGTTAVVQRVDGDMDELQATANALVDGGQVAVVGSGADGAQFVVGVPDGVPVNAGEVVGELAAMVGGGGGGPPDFAQGGGPDAERLDDALSRAADVLGDAASAE.

Histidine 619, histidine 623, cysteine 722, and histidine 726 together coordinate Zn(2+).

This sequence belongs to the class-II aminoacyl-tRNA synthetase family. It depends on Zn(2+) as a cofactor.

The protein resides in the cytoplasm. It catalyses the reaction tRNA(Ala) + L-alanine + ATP = L-alanyl-tRNA(Ala) + AMP + diphosphate. In terms of biological role, catalyzes the attachment of alanine to tRNA(Ala) in a two-step reaction: alanine is first activated by ATP to form Ala-AMP and then transferred to the acceptor end of tRNA(Ala). Also edits incorrectly charged Ser-tRNA(Ala) and Gly-tRNA(Ala) via its editing domain. The protein is Alanine--tRNA ligase of Halobacterium salinarum (strain ATCC 29341 / DSM 671 / R1).